A 198-amino-acid polypeptide reads, in one-letter code: Ribonuclease HII (198 aa).

An RNase H type-2 domain is found at 3 to 194 (RRVCGVDEAG…VKRCLALGQQ (192 aa)). The a divalent metal cation site is built by Asp-9, Glu-10, and Asp-101.

Belongs to the RNase HII family. It depends on Mn(2+) as a cofactor. Mg(2+) serves as cofactor.

Its subcellular location is the cytoplasm. It carries out the reaction Endonucleolytic cleavage to 5'-phosphomonoester.. Endonuclease that specifically degrades the RNA of RNA-DNA hybrids. The protein is Ribonuclease HII of Laribacter hongkongensis (strain HLHK9).